The primary structure comprises 474 residues: Proline--tRNA ligase (474 aa).

The protein belongs to the class-II aminoacyl-tRNA synthetase family. ProS type 3 subfamily. In terms of assembly, homodimer.

It localises to the cytoplasm. It catalyses the reaction tRNA(Pro) + L-proline + ATP = L-prolyl-tRNA(Pro) + AMP + diphosphate. Its function is as follows. Catalyzes the attachment of proline to tRNA(Pro) in a two-step reaction: proline is first activated by ATP to form Pro-AMP and then transferred to the acceptor end of tRNA(Pro). The protein is Proline--tRNA ligase of Aster yellows witches'-broom phytoplasma (strain AYWB).